We begin with the raw amino-acid sequence, 495 residues long: Aspartyl/glutamyl-tRNA(Asn/Gln) amidotransferase subunit B (495 aa).

The protein belongs to the GatB/GatE family. GatB subfamily. As to quaternary structure, heterotrimer of A, B and C subunits.

The catalysed reaction is L-glutamyl-tRNA(Gln) + L-glutamine + ATP + H2O = L-glutaminyl-tRNA(Gln) + L-glutamate + ADP + phosphate + H(+). It carries out the reaction L-aspartyl-tRNA(Asn) + L-glutamine + ATP + H2O = L-asparaginyl-tRNA(Asn) + L-glutamate + ADP + phosphate + 2 H(+). Allows the formation of correctly charged Asn-tRNA(Asn) or Gln-tRNA(Gln) through the transamidation of misacylated Asp-tRNA(Asn) or Glu-tRNA(Gln) in organisms which lack either or both of asparaginyl-tRNA or glutaminyl-tRNA synthetases. The reaction takes place in the presence of glutamine and ATP through an activated phospho-Asp-tRNA(Asn) or phospho-Glu-tRNA(Gln). The protein is Aspartyl/glutamyl-tRNA(Asn/Gln) amidotransferase subunit B of Gloeothece citriformis (strain PCC 7424) (Cyanothece sp. (strain PCC 7424)).